Consider the following 1165-residue polypeptide: Error-prone DNA polymerase (1165 aa).

The interval 1111–1165 is disordered; sequence SEGLARPPLPTGADLYEPLTYEPLNGDRRDNPDAPAQRLRHPRDVRILPPSRDFH. Residues 1152-1165 show a composition bias toward basic and acidic residues; the sequence is PRDVRILPPSRDFH.

This sequence belongs to the DNA polymerase type-C family. DnaE2 subfamily.

The protein resides in the cytoplasm. It carries out the reaction DNA(n) + a 2'-deoxyribonucleoside 5'-triphosphate = DNA(n+1) + diphosphate. In terms of biological role, DNA polymerase involved in damage-induced mutagenesis and translesion synthesis (TLS). It is not the major replicative DNA polymerase. The sequence is that of Error-prone DNA polymerase from Rhodopseudomonas palustris (strain HaA2).